Consider the following 408-residue polypeptide: Phosphoenolpyruvate/phosphate translocator 1, chloroplastic (408 aa).

The N-terminal 85 residues, 1–85 (MQSSAVFSLS…SLDTNRFRTA (85 aa)), are a transit peptide targeting the chloroplast. Ala86 carries the N-acetylalanine modification. Helical transmembrane passes span 105–125 (VLEL…FNIY), 137–157 (MTVT…MWVL), 165–185 (ISGA…LGNL), 198–218 (FTHT…AMFL), 222–242 (PTPW…LASI), 283–303 (ITLF…VTFF), 324–346 (IYTK…YMIL), and 377–396 (VSPV…FLYS). The EamA domain maps to 124–241 (IYNKQVLKAL…PIVGGVALAS (118 aa)).

The protein belongs to the TPT transporter family. PPT (TC 2.A.7.9) subfamily. In terms of tissue distribution, expressed in root columella, lateral root cap and root vasculature tissue. In leaves, highly expressed in xylem parenchyma cells. In flowers, expressed in sepals, petals, filaments of the stamens, anthers and stigma.

It localises to the plastid. Its subcellular location is the chloroplast membrane. Phosphoenolpyruvate/phosphate translocator that transports phosphoenolpyruvate (PEP), 2-phosphoglycerate, 3-phosphoglycerate and dihydroxyacetone phosphate. Imports PEP to the chloroplast stroma as one substrate of the shikimate pathway, from which aromatic amino acids and a variety of secondary products derive. Required for correct leaf mesophyll cell development and expression of chlorophyll a/b binding protein 3 (CAB3). The sequence is that of Phosphoenolpyruvate/phosphate translocator 1, chloroplastic (PPT1) from Arabidopsis thaliana (Mouse-ear cress).